A 417-amino-acid polypeptide reads, in one-letter code: Envelope glycoprotein D (417 aa).

The signal sequence occupies residues 1–18 (MQGPTLAVLGALLAVAVS). Residues 19–360 (LPTPAPRVTV…APATPAAPDA (342 aa)) lie on the Virion surface side of the membrane. 2 N-linked (GlcNAc...) asparagine; by host glycosylation sites follow: Asn-41 and Asn-102. Disulfide bonds link Cys-75–Cys-197, Cys-114–Cys-213, and Cys-126–Cys-135. Residues 259–355 (EESKGYEPPP…THPPPAPATP (97 aa)) are disordered. Over residues 279 to 292 (GDDEAREDEGETED) the composition is skewed to acidic residues. A helical membrane pass occupies residues 361–389 (VPVGVGIGIAAAAIACVAAAAAGAYFVYT). The Intravirion portion of the chain corresponds to 390–417 (RRRGAGPLPRKPKKLPAFGNVNYSALPG).

Belongs to the herpesviridae glycoprotein D family.

The protein localises to the virion membrane. Its function is as follows. Envelope glycoprotein that binds to host cell entry receptors, promoting the virus entry into host cells. May trigger fusion with host membrane, by recruiting the fusion machinery composed of gB and gH/gL. The polypeptide is Envelope glycoprotein D (gD) (Bovine herpesvirus 1.2 (strain ST) (BoHV-1)).